A 596-amino-acid polypeptide reads, in one-letter code: Arginine--tRNA ligase (596 aa).

The short motif at 128-138 (ANPTSSLHVGH) is the 'HIGH' region element.

Belongs to the class-I aminoacyl-tRNA synthetase family. Monomer.

Its subcellular location is the cytoplasm. It carries out the reaction tRNA(Arg) + L-arginine + ATP = L-arginyl-tRNA(Arg) + AMP + diphosphate. This is Arginine--tRNA ligase from Acinetobacter baumannii (strain SDF).